The chain runs to 361 residues: Nicotinate-nucleotide--dimethylbenzimidazole phosphoribosyltransferase (361 aa).

The active-site Proton acceptor is Glu-320.

This sequence belongs to the CobT family. As to quaternary structure, homodimer.

The catalysed reaction is 5,6-dimethylbenzimidazole + nicotinate beta-D-ribonucleotide = alpha-ribazole 5'-phosphate + nicotinate + H(+). It functions in the pathway nucleoside biosynthesis; alpha-ribazole biosynthesis; alpha-ribazole from 5,6-dimethylbenzimidazole: step 1/2. Functionally, catalyzes the synthesis of alpha-ribazole-5'-phosphate from nicotinate mononucleotide (NAMN) and 5,6-dimethylbenzimidazole (DMB). In Shigella boydii serotype 18 (strain CDC 3083-94 / BS512), this protein is Nicotinate-nucleotide--dimethylbenzimidazole phosphoribosyltransferase.